Reading from the N-terminus, the 3623-residue chain is Cubilin (3623 aa).

Positions 1-20 (MSSQFLWGFVTLLMIAELDG) are cleaved as a signal peptide. The propeptide at 21–32 (KTGKPEQRGQKR) is removed in mature form. Positions 39 to 46 (PRMTTEEG) are interaction with AMN. Asparagine 95 carries N-linked (GlcNAc...) asparagine glycosylation. Positions 129 to 165 (ERKVCSSNPCLNGGTCVNLHDSFVCICPSQWKGLFCS) constitute an EGF-like 1 domain. Cystine bridges form between cysteine 133-cysteine 144, cysteine 138-cysteine 153, cysteine 155-cysteine 164, cysteine 171-cysteine 187, cysteine 181-cysteine 196, cysteine 198-cysteine 207, cysteine 264-cysteine 277, cysteine 271-cysteine 286, and cysteine 289-cysteine 300. One can recognise an EGF-like 2; calcium-binding domain in the interval 167–208 (DVNECVVYSGTPFGCQSGSTCVNTVGSFRCDCTPDTYGPQCA). Residues 260-301 (DKDECSLQPSPCSEHAQCFNTQGSFYCGACPKGWQGNGYECQ) form the EGF-like 3; calcium-binding domain. The EGF-like 4; calcium-binding domain maps to 302 to 345 (DINECEINNGGCSQAPLVPCLNTPGSFSCGNCPAGFSGDGRVCT). 2 consecutive EGF-like domains span residues 346–385 (PVDICSIHNGGCHPEATCSSSPVLGSFLPVCTCPPGYTGN) and 395–430 (LSNICSRHPCVNGQCIETVSSYFCKCDSGWSGQNCT). Cystine bridges form between cysteine 350-cysteine 363, cysteine 357-cysteine 376, cysteine 399-cysteine 409, cysteine 404-cysteine 418, cysteine 420-cysteine 429, cysteine 436-cysteine 447, cysteine 441-cysteine 456, cysteine 458-cysteine 467, cysteine 474-cysteine 500, cysteine 527-cysteine 549, cysteine 590-cysteine 616, cysteine 643-cysteine 665, and cysteine 708-cysteine 734. Asparagine 428 carries an N-linked (GlcNAc...) asparagine glycan. Residues 432-468 (NINDCSSNPCLNGGTCIDGINGFTCDCTSSWTGYYCQ) form the EGF-like 7; calcium-binding domain. CUB domains lie at 474 to 586 (CGGI…WEAK), 590 to 702 (CGGI…YLTT), 708 to 816 (CGGN…YQVA), 817 to 928 (CGGM…FSSD), 932 to 1042 (CGEV…YEAI), 1048 to 1161 (CLYD…WDGS), 1165 to 1277 (CGGN…FRQR), 1278 to 1389 (CDNV…WFTH), 1391 to 1506 (CGGE…WRAV), 1510 to 1619 (CGGI…FREE), 1620 to 1734 (CGGR…YSAS), 1738 to 1850 (CGGS…FKNI), 1852 to 1963 (GNNN…WFAV), 1978 to 2091 (CGGF…FHKS), 2092 to 2213 (CGGY…YEAK), 2217 to 2334 (CGGT…YSIA), 2336 to 2448 (CGGT…FKSS), 2452 to 2565 (CGGD…YTST), 2570 to 2687 (CGGF…YSFT), 2689 to 2801 (CGGI…WTTN), 2805 to 2919 (CGGT…FISR), 2920 to 3035 (CGRT…YRAI), 3037 to 3150 (CGGI…FRET), 3157 to 3274 (CGGY…YTFV), 3278 to 3393 (CGGT…YQIA), 3395 to 3507 (CNRE…WTSS), and 3511 to 3623 (CGGT…MWSS). A glycan (N-linked (GlcNAc...) asparagine) is linked at asparagine 491. N-linked (GlcNAc...) asparagine glycans are attached at residues asparagine 711 and asparagine 749. Cysteine 761 and cysteine 779 are oxidised to a cystine. The N-linked (GlcNAc...) asparagine glycan is linked to asparagine 781. Residues cysteine 817 and cysteine 842 are joined by a disulfide bond. The N-linked (GlcNAc...) asparagine glycan is linked to asparagine 857. 2 cysteine pairs are disulfide-bonded: cysteine 869–cysteine 891 and cysteine 932–cysteine 958. The N-linked (GlcNAc...) asparagine glycan is linked to asparagine 957. A Ca(2+)-binding site is contributed by glutamate 980. Asparagine 984 carries N-linked (GlcNAc...) asparagine glycosylation. Residues cysteine 985 and cysteine 1005 are joined by a disulfide bond. The Ca(2+) site is built by aspartate 988, aspartate 1027, and leucine 1030. Residues cysteine 1048 and cysteine 1074 are joined by a disulfide bond. The Ca(2+) site is built by glutamate 1096, aspartate 1105, and aspartate 1146. Cysteine 1165 and cysteine 1191 are joined by a disulfide. Asparagine 1168 is a glycosylation site (N-linked (GlcNAc...) asparagine). The Ca(2+) site is built by glutamate 1213, aspartate 1221, aspartate 1262, glycine 1264, and glutamine 1265. A disulfide bond links cysteine 1218 and cysteine 1240. Residues cysteine 1278 and cysteine 1306 are joined by a disulfide bond. 3 N-linked (GlcNAc...) asparagine glycosylation sites follow: asparagine 1285, asparagine 1307, and asparagine 1319. Glutamate 1328 provides a ligand contact to Ca(2+). The N-linked (GlcNAc...) asparagine glycan is linked to asparagine 1332. The cysteines at positions 1333 and 1351 are disulfide-linked. Aspartate 1336, aspartate 1373, and isoleucine 1375 together coordinate Ca(2+). Disulfide bonds link cysteine 1391/cysteine 1417 and cysteine 1444/cysteine 1466. Residue asparagine 1500 is glycosylated (N-linked (GlcNAc...) asparagine). Cysteine 1510 and cysteine 1536 are joined by a disulfide. N-linked (GlcNAc...) asparagine glycans are attached at residues asparagine 1551, asparagine 1646, and asparagine 1671. Cysteine 1620 and cysteine 1647 are oxidised to a cystine. 3 cysteine pairs are disulfide-bonded: cysteine 1675-cysteine 1697, cysteine 1738-cysteine 1764, and cysteine 1791-cysteine 1812. N-linked (GlcNAc...) asparagine glycosylation is found at asparagine 1802 and asparagine 1819. Disulfide bonds link cysteine 1905–cysteine 1927, cysteine 1978–cysteine 2006, and cysteine 2032–cysteine 2054. N-linked (GlcNAc...) asparagine glycans are attached at residues asparagine 2085 and asparagine 2117. Disulfide bonds link cysteine 2092-cysteine 2118 and cysteine 2217-cysteine 2247. The N-linked (GlcNAc...) asparagine glycan is linked to asparagine 2274. Disulfide bonds link cysteine 2275–cysteine 2297, cysteine 2336–cysteine 2363, cysteine 2390–cysteine 2411, cysteine 2452–cysteine 2478, and cysteine 2505–cysteine 2527. A glycan (N-linked (GlcNAc...) asparagine) is linked at asparagine 2400. 3 N-linked (GlcNAc...) asparagine glycosylation sites follow: asparagine 2531, asparagine 2581, and asparagine 2610. Cysteine 2570 and cysteine 2599 are disulfide-bonded. 7 disulfides stabilise this stretch: cysteine 2628–cysteine 2649, cysteine 2689–cysteine 2715, cysteine 2742–cysteine 2764, cysteine 2805–cysteine 2831, cysteine 2860–cysteine 2883, cysteine 2920–cysteine 2946, and cysteine 2977–cysteine 2999. N-linked (GlcNAc...) asparagine glycans are attached at residues asparagine 2813, asparagine 2875, asparagine 2945, and asparagine 2989. Threonine 3008 is subject to Phosphothreonine. 2 cysteine pairs are disulfide-bonded: cysteine 3037/cysteine 3064 and cysteine 3091/cysteine 3113. 4 N-linked (GlcNAc...) asparagine glycosylation sites follow: asparagine 3042, asparagine 3106, asparagine 3125, and asparagine 3165. 2 disulfide bridges follow: cysteine 3157-cysteine 3185 and cysteine 3215-cysteine 3237. Asparagine 3268, asparagine 3283, and asparagine 3290 each carry an N-linked (GlcNAc...) asparagine glycan. Disulfide bonds link cysteine 3278/cysteine 3306 and cysteine 3332/cysteine 3354. N-linked (GlcNAc...) asparagine glycans are attached at residues asparagine 3357, asparagine 3400, and asparagine 3430. A disulfide bond links cysteine 3395 and cysteine 3421. 3 disulfide bridges follow: cysteine 3448–cysteine 3470, cysteine 3511–cysteine 3537, and cysteine 3564–cysteine 3586. Asparagine 3533 carries N-linked (GlcNAc...) asparagine glycosylation.

In terms of assembly, interacts with AMN. Component of the cubam complex composed of one CUBN trimer and one AMN chain. The cubam complex can dimerize. Interacts with LRP2 in a dual-receptor complex in a calcium-dependent manner. Found in a complex with PID1/PCLI1, LRP1 and CUBNI. Interacts with LRP1 and PID1/PCLI1. Post-translationally, the precursor is cleaved by a trans-Golgi proteinase furin, removing a propeptide. In terms of processing, N-glycosylated. Expressed to intestinal, renal and yalk sac apical membranes. In kidney, expressed in the proximal tubule.

Its subcellular location is the cell membrane. It is found in the endosome membrane. The protein resides in the lysosome membrane. Endocytic receptor which plays a role in lipoprotein, vitamin and iron metabolism by facilitating their uptake. Acts together with LRP2 to mediate endocytosis of high-density lipoproteins, GC, hemoglobin, ALB, TF and SCGB1A1. Acts together with AMN to mediate endocytosis of the CBLIF-cobalamin complex. Binds to ALB, MB, Kappa and lambda-light chains, TF, hemoglobin, GC, SCGB1A1, APOA1, high density lipoprotein, and the CBLIF-cobalamin complex. Ligand binding requires calcium. Serves as important transporter in several absorptive epithelia, including intestine, renal proximal tubules and embryonic yolk sac. May play an important role in the development of the peri-implantation embryo through internalization of APOA1 and cholesterol. Binds to LGALS3 at the maternal-fetal interface. The chain is Cubilin (Cubn) from Rattus norvegicus (Rat).